Reading from the N-terminus, the 118-residue chain is DNA-binding protein inhibitor ID-3-B (118 aa).

The 53-residue stretch at 32-84 folds into the bHLH domain; sequence SLKGAGIDETMGLLYDMNGCYSKLKELVPGIPQGSKLSQVEILQHVIDYIFDL.

Homodimer. Heterodimer with other HLH proteins. Interacts (via HLH domain) with the bHLH protein hes4/hairy2 (via Orange domain). Interacts with stat3.

The protein resides in the nucleus. Functionally, transcriptional regulator (lacking a basic DNA binding domain) which negatively regulates the basic helix-loop-helix (bHLH) transcription factors by forming heterodimers and inhibiting their DNA binding and transcriptional activity. Influences cell fate decisions in the embryo by sequestering and blocking the activity of the bHLH transcription factors that control these decisions. Inhibits the binding of myogenic bHLH-containing complexes to E-box DNA, thereby preventing activation of muscle-specific target genes. Also inhibits the activity of neurogenic factor neurod1/neuroD. Plays a role in cell cycle progression and survival of neural crest progenitors; binding to either hes4-B/hairy2b or stat3 blocks the formation of transcription factor complexes and the repressor function of hes4-B/hairy2B, to allow neural crest progenitors to differentiate. May play a role in the regulation of the circadian rhythm. This chain is DNA-binding protein inhibitor ID-3-B (id3-b), found in Xenopus laevis (African clawed frog).